The chain runs to 133 residues: Interleukin-4 (133 aa).

Positions 1–24 are cleaved as a signal peptide; the sequence is MGLTSQLIPTLVCLLACTSNFVHG. Disulfide bonds link Cys27–Cys133, Cys48–Cys85, and Cys70–Cys105. Asn62 carries N-linked (GlcNAc...) asparagine glycosylation.

Belongs to the IL-4/IL-13 family.

The protein localises to the secreted. In terms of biological role, participates in at least several B-cell activation processes as well as of other cell types. It is a costimulator of DNA-synthesis. It induces the expression of class II MHC molecules on resting B-cells. It enhances both secretion and cell surface expression of IgE and IgG1. It also regulates the expression of the low affinity Fc receptor for IgE (CD23) on both lymphocytes and monocytes. Positively regulates IL31RA expression in macrophages. Stimulates autophagy in dendritic cells by interfering with mTORC1 signaling and through the induction of RUFY4. This is Interleukin-4 (IL4) from Sus scrofa (Pig).